The following is an 85-amino-acid chain: uncharacterized protein (85 aa).

The residue at position 22 (Ser-22) is a Phosphoserine.

The protein localises to the cytoplasm. It localises to the nucleus. This is an uncharacterized protein from Saccharomyces cerevisiae (strain ATCC 204508 / S288c) (Baker's yeast).